Here is a 98-residue protein sequence, read N- to C-terminus: Large ribosomal subunit protein uL23 (98 aa).

This sequence belongs to the universal ribosomal protein uL23 family. As to quaternary structure, part of the 50S ribosomal subunit. Contacts protein L29, and trigger factor when it is bound to the ribosome.

Functionally, one of the early assembly proteins it binds 23S rRNA. One of the proteins that surrounds the polypeptide exit tunnel on the outside of the ribosome. Forms the main docking site for trigger factor binding to the ribosome. This chain is Large ribosomal subunit protein uL23, found in Rickettsia rickettsii (strain Iowa).